The sequence spans 774 residues: Fe(3+) dicitrate transport protein FecA (774 aa).

A signal peptide spans 1 to 33 (MTPLRVFRKTTPLVNTIRLSLLPLAGLSFSAFA). A TonB box motif is present at residues 56–63 (FTLSVDAS). The region spanning 129 to 250 (DVFEHAGARD…VGGVVNFVTR (122 aa)) is the TBDR plug domain. Residues 255–774 (DFGIEAGVEG…TLYMQGSLKF (520 aa)) enclose the TBDR beta-barrel domain. The short motif at 757–774 (GIYAGQPRTLYMQGSLKF) is the TonB C-terminal box element.

Belongs to the TonB-dependent receptor family. Interacts (via periplasmic N-terminus) with FecR (via periplasmic C-terminus).

It localises to the cell outer membrane. Functionally, fecA is the outer membrane receptor protein in the Fe(3+) dicitrate transport system. This Escherichia coli (strain K12) protein is Fe(3+) dicitrate transport protein FecA (fecA).